The chain runs to 253 residues: Imidazole glycerol phosphate synthase subunit HisF (253 aa).

Catalysis depends on residues aspartate 11 and aspartate 130.

This sequence belongs to the HisA/HisF family. In terms of assembly, heterodimer of HisH and HisF.

The protein resides in the cytoplasm. It carries out the reaction 5-[(5-phospho-1-deoxy-D-ribulos-1-ylimino)methylamino]-1-(5-phospho-beta-D-ribosyl)imidazole-4-carboxamide + L-glutamine = D-erythro-1-(imidazol-4-yl)glycerol 3-phosphate + 5-amino-1-(5-phospho-beta-D-ribosyl)imidazole-4-carboxamide + L-glutamate + H(+). The protein operates within amino-acid biosynthesis; L-histidine biosynthesis; L-histidine from 5-phospho-alpha-D-ribose 1-diphosphate: step 5/9. IGPS catalyzes the conversion of PRFAR and glutamine to IGP, AICAR and glutamate. The HisF subunit catalyzes the cyclization activity that produces IGP and AICAR from PRFAR using the ammonia provided by the HisH subunit. In Dehalococcoides mccartyi (strain ATCC BAA-2266 / KCTC 15142 / 195) (Dehalococcoides ethenogenes (strain 195)), this protein is Imidazole glycerol phosphate synthase subunit HisF.